The chain runs to 223 residues: UPF0502 protein Sde_2426 (223 aa).

Belongs to the UPF0502 family.

This Saccharophagus degradans (strain 2-40 / ATCC 43961 / DSM 17024) protein is UPF0502 protein Sde_2426.